Consider the following 442-residue polypeptide: Coiled-coil domain-containing protein 91 (442 aa).

A GGA1-binding motif region spans residues 1 to 16 (MDDDDFGGFEAAETFD). The disordered stretch occupies residues 1 to 27 (MDDDDFGGFEAAETFDGEQGGNQAVSP). Ser-43 and Ser-46 each carry phosphoserine. The disordered stretch occupies residues 48-79 (ELILDHDRSSPSSGHLRSDAVISSPDDTRADS). 2 coiled-coil regions span residues 127 to 213 (GVHV…ALSI) and 248 to 409 (CEEL…RLDQ). The homodimerization stretch occupies residues 211 to 414 (LSIIVDEYKA…RRLDQVTRQR (204 aa)).

In terms of assembly, homodimer. Interacts with GGA1, GGA2 and AP1G1.

The protein resides in the membrane. Its subcellular location is the golgi apparatus. The protein localises to the trans-Golgi network membrane. It is found in the trans-Golgi network. Its function is as follows. Involved in the regulation of membrane traffic through the trans-Golgi network (TGN). Functions in close cooperation with the GGAs in the sorting of hydrolases to lysosomes. This chain is Coiled-coil domain-containing protein 91 (Ccdc91), found in Rattus norvegicus (Rat).